A 199-amino-acid chain; its full sequence is MMQDVSSSPVSPADDSLSNSEEEPDRQQPPSGKRGGRKRRSSRRSAGGGAGPGGAAGGGVGGGDEPGSPAQGKRGKKSAGCGGGAGGGGSSSGGGSPQSYEELQTQRVMANVRERQRTQSLNEAFAALRKIIPTLPSDKLSKIQTLKLAARYIDFLYQVLQSDELDSKMASCSYVAHERLSYAFSVWRMEGAWSMSASH.

Low complexity predominate over residues 1-18 (MMQDVSSSPVSPADDSLS). The segment at 1 to 102 (MMQDVSSSPV…GGGSPQSYEE (102 aa)) is disordered. Over residues 34–43 (RGGRKRRSSR) the composition is skewed to basic residues. Gly residues-rich tracts occupy residues 46-65 (AGGG…GGDE) and 80-96 (GCGG…GGGS). A bHLH domain is found at 105 to 156 (TQRVMANVRERQRTQSLNEAFAALRKIIPTLPSDKLSKIQTLKLAARYIDFL). The sufficient for transactivation activity stretch occupies residues 158–188 (QVLQSDELDSKMASCSYVAHERLSYAFSVWR).

Efficient DNA binding requires dimerization with another bHLH protein. Homodimer or heterodimer with E proteins such as TCF3. ID1 binds preferentially to TCF3 but does not interact efficiently with TWIST1 so ID1 levels control the amount of TCF3 available to dimerize with TWIST and thus determine the type of dimer formed.

The protein localises to the nucleus. Its function is as follows. Acts as a transcriptional regulator. Inhibits myogenesis by sequestrating E proteins, inhibiting trans-activation by MEF2, and inhibiting DNA-binding by MYOD1 through physical interaction. This interaction probably involves the basic domains of both proteins. Also represses expression of pro-inflammatory cytokines such as TNFA and IL1B. Regulates cranial suture patterning and fusion. Activates transcription as a heterodimer with E proteins. Regulates gene expression differentially, depending on dimer composition. Homodimers induce expression of FGFR2 and POSTN while heterodimers repress FGFR2 and POSTN expression and induce THBS1 expression. Heterodimerization is also required for osteoblast differentiation. Represses the activity of the circadian transcriptional activator: NPAS2-BMAL1 heterodimer. In Microcebus murinus (Gray mouse lemur), this protein is Twist-related protein 1 (TWIST1).